A 288-amino-acid chain; its full sequence is Bifunctional protein FolD (288 aa).

NADP(+) contacts are provided by residues 166–168 (GAS) and I232.

It belongs to the tetrahydrofolate dehydrogenase/cyclohydrolase family. Homodimer.

The enzyme catalyses (6R)-5,10-methylene-5,6,7,8-tetrahydrofolate + NADP(+) = (6R)-5,10-methenyltetrahydrofolate + NADPH. It carries out the reaction (6R)-5,10-methenyltetrahydrofolate + H2O = (6R)-10-formyltetrahydrofolate + H(+). The protein operates within one-carbon metabolism; tetrahydrofolate interconversion. Its function is as follows. Catalyzes the oxidation of 5,10-methylenetetrahydrofolate to 5,10-methenyltetrahydrofolate and then the hydrolysis of 5,10-methenyltetrahydrofolate to 10-formyltetrahydrofolate. This is Bifunctional protein FolD from Erwinia tasmaniensis (strain DSM 17950 / CFBP 7177 / CIP 109463 / NCPPB 4357 / Et1/99).